The chain runs to 250 residues: DNA repair protein RecO (250 aa).

This sequence belongs to the RecO family.

In terms of biological role, involved in DNA repair and RecF pathway recombination. This chain is DNA repair protein RecO, found in Staphylococcus aureus (strain COL).